The following is a 235-amino-acid chain: Putative uridine kinase C227.14 (235 aa).

Gly-36–Ser-43 is a binding site for ATP.

Belongs to the uridine kinase family.

Its subcellular location is the cytoplasm. It localises to the nucleus. It catalyses the reaction uridine + ATP = UMP + ADP + H(+). It carries out the reaction cytidine + ATP = CMP + ADP + H(+). It functions in the pathway pyrimidine metabolism; CTP biosynthesis via salvage pathway; CTP from cytidine: step 1/3. Its pathway is pyrimidine metabolism; UMP biosynthesis via salvage pathway; UMP from uridine: step 1/1. This is Putative uridine kinase C227.14 from Schizosaccharomyces pombe (strain 972 / ATCC 24843) (Fission yeast).